The sequence spans 225 residues: Protein-L-isoaspartate O-methyltransferase 2 (225 aa).

Ser73 is an active-site residue.

This sequence belongs to the methyltransferase superfamily. L-isoaspartyl/D-aspartyl protein methyltransferase family.

The protein resides in the cytoplasm. The enzyme catalyses [protein]-L-isoaspartate + S-adenosyl-L-methionine = [protein]-L-isoaspartate alpha-methyl ester + S-adenosyl-L-homocysteine. Its function is as follows. Catalyzes the methyl esterification of L-isoaspartyl residues in peptides and proteins that result from spontaneous decomposition of normal L-aspartyl and L-asparaginyl residues. It plays a role in the repair and/or degradation of damaged proteins. In Pelobacter propionicus (strain DSM 2379 / NBRC 103807 / OttBd1), this protein is Protein-L-isoaspartate O-methyltransferase 2.